Consider the following 954-residue polypeptide: METGSEEEKWEKLDAEFDHFVVDMKPFVLKLPHRSERQRCALWIRKLCEPSGTGAGLMGRKNRNLYAKLLLHMLRRGILEGPFTHRPEPGTLKTLPSYMSIYFDEPNQAQPKDSSPEKLPDWVRGELQTGEQRLSDSWQCSSGEDNTLVLAASDAHREQYTGKLRMRSHSVSPTYREDKQHITSKICEVHSKTSPISLDDSDIEVRLNSWNLGIENPRYLRQKPLPVSLMTPKGSLRKASSLHDDHFLSRMHEKELDMKTKMMEAKFSEEKLKLQQKHDAEVQKILERKNNELEELKILYKKKQTETEETIRKLEKKVQILIRDCQVIRETKENQITELKKICEQSTESLNNDWEKKLHNAVAEMEKDKFELQKHHTETIQELLEDTNVRLSKMEADYVVQMQSTNHMIKELEGRVQQLMGEAENSNLQRQKLTQEKLELERCYQITCNELQELKTRRNILHKEKEHLVNDYEQNVKLLKTKYDSDINLLRQEHALSTSKTSGVIEELEQNICQLKQQVQESELQRKQQVKDQENKFHMEKNHLKHTYEKKVHELQSELDKEKEDAQRKIHKFEEALKEKEEQLSRVTEVQRLQAQQADAALEEFKRQVEVNSEKVYGEMKEQMEKVEADLTRSKSLREKQSKEFLWQLEDAKQRYEQQIVELKLEHEQEKTHLLQQHSAEKDSLVRDHDREIENLEKQLRAANMEHENQIQESKKRDAQVIADMEAQVHKLREELISVNSQRKQQLIELGLLREEEKQRAAKDHETAVKKLKAESERVKMELKKTHAAETEMTLEKANSRLKQIEKEYTQKLAKSSQIIAELQTTISSLKEESSRQQLAAERRLQDVIQKFEDEKQQLIRDNDQAIKALQDELETRSHQVRSAEKKLHHKELEAQEQIMYIRQEYETKFKGLMPASLRQELEDTISSLKSQVNFLQKRASILQEELTTYQSRR.

Residues 276 to 954 are a coiled coil; sequence QKHDAEVQKI…EELTTYQSRR (679 aa).

The protein resides in the cytoplasm. It localises to the cytoskeleton. It is found in the microtubule organizing center. The protein localises to the centrosome. This Mus musculus (Mouse) protein is Centrosomal protein of 112 kDa (Cep112).